A 243-amino-acid polypeptide reads, in one-letter code: Adenylate dimethylallyltransferase (243 aa).

It catalyses the reaction dimethylallyl diphosphate + AMP = N(6)-(dimethylallyl)adenosine 5'-phosphate + diphosphate. Its function is as follows. Transfers dimethylallyl groups to AMP as part of the biosynthesis of cytokinin phytohormones. The polypeptide is Adenylate dimethylallyltransferase (tzs) (Agrobacterium tumefaciens (strain T37)).